The following is a 1103-amino-acid chain: Activity-dependent neuroprotector homeobox protein (1103 aa).

Residues lysine 39 and lysine 72 each participate in a glycyl lysine isopeptide (Lys-Gly) (interchain with G-Cter in SUMO2) cross-link. Residues 74 to 97 form a C2H2-type 1; degenerate zinc finger; it reads FCCSACPFSSKFFSAYKSHFRNVH. Serine 98 carries the post-translational modification Phosphoserine. A C2H2-type 2; degenerate zinc finger spans residues 107 to 129; it reads LNCPYCTFNADKKTLETHIKIFH. The tract at residues 133 to 154 is disordered; it reads SSAPSSSLSTFKDKNKNDGLKP. Residues 143–154 show a composition bias toward basic and acidic residues; sequence FKDKNKNDGLKP. Glycyl lysine isopeptide (Lys-Gly) (interchain with G-Cter in SUMO2) cross-links involve residues lysine 144 and lysine 155. A C2H2-type 3; degenerate zinc finger spans residues 165-188; it reads YYCKKCTYRDPLYEIVRKHIYREH. Glycyl lysine isopeptide (Lys-Gly) (interchain with G-Cter in SUMO2) cross-links involve residues lysine 203, lysine 231, lysine 266, lysine 274, lysine 278, lysine 279, lysine 311, and lysine 335. The C2H2-type 4; degenerate zinc-finger motif lies at 221–244; that stretch reads IHCKRCLFMPKSYEALVQHVIEDH. Arginine 348 carries the post-translational modification Asymmetric dimethylarginine. Residues 354 to 361 form a neuroprotective peptide (NAP) region; that stretch reads NAPVSIPQ. A disordered region spans residues 360–439; sequence PQQSQSVKQL…PAATGPPPSN (80 aa). Glycyl lysine isopeptide (Lys-Gly) (interchain with G-Cter in SUMO2) cross-links involve residues lysine 367 and lysine 408. Over residues 393 to 423 the composition is skewed to polar residues; the sequence is SLQTANTSSLPPGQVKSPSVSQSQASRVLGQ. 2 positions are modified to phosphoserine: serine 409 and serine 413. Lysine 427 is covalently cross-linked (Glycyl lysine isopeptide (Lys-Gly) (interchain with G-Cter in SUMO2)). Residues 427–438 are compositionally biased toward pro residues; the sequence is KPPPAATGPPPS. The segment at 447–469 adopts a C2H2-type 5; atypical zinc-finger fold; it reads KICTICNELFPENVYSVHFEKEH. 2 C2H2-type zinc fingers span residues 489–510 and 512–535; these read SKCLYCNRYLPTDTLLNHMLIH and LSCPYCRSTFNDVEKMAAHMRMVH. Glycyl lysine isopeptide (Lys-Gly) (interchain with G-Cter in SUMO2) cross-links involve residues lysine 600 and lysine 606. Serine 608 carries the post-translational modification Phosphoserine. Glycyl lysine isopeptide (Lys-Gly) (interchain with G-Cter in SUMO2) cross-links involve residues lysine 616, lysine 621, lysine 632, and lysine 658. Residues 622–647 form a C2H2-type 8; atypical zinc finger; sequence TLCPLCFSILKGPISDALAHHLRERH. Residues 662–686 form a C2H2-type 9; atypical zinc finger; the sequence is YKCIHCLGVYTSNMTASTITLHLVH. The tract at residues 691 to 712 is disordered; sequence GKTQNGQDKTNAPSRLNQSPGL. Positions 692 to 710 are enriched in polar residues; it reads KTQNGQDKTNAPSRLNQSP. Lysine 699 is covalently cross-linked (Glycyl lysine isopeptide (Lys-Gly) (interchain with G-Cter in SUMO2)). The residue at position 709 (serine 709) is a Phosphoserine. Residues lysine 716, lysine 728, and lysine 731 each participate in a glycyl lysine isopeptide (Lys-Gly) (interchain with G-Cter in SUMO2) cross-link. Residue serine 738 is modified to Phosphoserine. Residue lysine 745 forms a Glycyl lysine isopeptide (Lys-Gly) (interchain with G-Cter in SUMO2) linkage. Residues 754-814 constitute a DNA-binding region (homeobox); it reads LDPKGHEDDS…SNKRKKCVRD (61 aa). Serine 805 is subject to Phosphoserine. Residues lysine 807, lysine 829, and lysine 835 each participate in a glycyl lysine isopeptide (Lys-Gly) (interchain with G-Cter in SUMO2) cross-link. Positions 873–1029 are disordered; that stretch reads DSFSDSFEHL…VQDDTEQLKW (157 aa). Serine 876, serine 878, serine 886, serine 889, and serine 905 each carry phosphoserine. Residues lysine 914, lysine 929, and lysine 936 each participate in a glycyl lysine isopeptide (Lys-Gly) (interchain with G-Cter in SUMO2) cross-link. Residues 922 to 954 show a composition bias toward basic and acidic residues; sequence ESEKLDQKEEEDGSKYETIHLTEERAKLMHDAS. Serine 954 and serine 956 each carry phosphoserine. Polar residues predominate over residues 972-982; the sequence is PSESGPGSRQV. Lysine 1017 participates in a covalent cross-link: Glycyl lysine isopeptide (Lys-Gly) (interchain with G-Cter in SUMO2). N6-acetyllysine; alternate is present on residues lysine 1036 and lysine 1043. Glycyl lysine isopeptide (Lys-Gly) (interchain with G-Cter in SUMO2); alternate cross-links involve residues lysine 1036 and lysine 1043. A disordered region spans residues 1045-1103; sequence QSQWENASENAERLPNPQIEWQNSTIDSEDGEQFDSMTDGVADPMHGSLTGVKLSSQQA. Phosphoserine is present on serine 1072.

As to quaternary structure, interacts (via N-terminal region) with beta-catenin/CTNNB1 (via the central armadillo domains); interaction is direct and stabilizes CTNNB1 by modulating its phosphorylation by glycogen synthase kinase-3 beta GSK3B.

The protein resides in the nucleus. It is found in the chromosome. May be involved in transcriptional regulation. May mediate some of the neuroprotective peptide VIP-associated effects involving normal growth and cancer proliferation. Positively modulates WNT-beta-catenin/CTNN1B signaling, acting by regulating phosphorylation of, and thereby stabilizing, CTNNB1. May be required for neural induction and neuronal differentiation. May be involved in erythroid differentiation. The sequence is that of Activity-dependent neuroprotector homeobox protein (Adnp) from Rattus norvegicus (Rat).